Consider the following 360-residue polypeptide: Photosystem II protein D1 (360 aa).

A run of 3 helical transmembrane segments spans residues 29–46 (YIGW…TATS), 118–133 (HFLT…EWEL), and 142–156 (WISV…AAAA). His-118 lines the chlorophyll a pocket. A pheophytin a-binding site is contributed by Tyr-126. Positions 170 and 189 each coordinate [CaMn4O5] cluster. Residues 197-218 (FHQLGVAGVFGGSLFSAMHGSL) form a helical membrane-spanning segment. Position 198 (His-198) interacts with chlorophyll a. Residues His-215 and 264-265 (SF) each bind a quinone. His-215 lines the Fe cation pocket. A Fe cation-binding site is contributed by His-272. The chain crosses the membrane as a helical span at residues 274–288 (FLGLWPVVGIWLTAL). [CaMn4O5] cluster contacts are provided by His-332, Glu-333, Asp-342, and Ala-344. Residues 345–360 (SGESLPVALTAPAVNG) constitute a propeptide that is removed on maturation.

Belongs to the reaction center PufL/M/PsbA/D family. PSII is composed of 1 copy each of membrane proteins PsbA, PsbB, PsbC, PsbD, PsbE, PsbF, PsbH, PsbI, PsbJ, PsbK, PsbL, PsbM, PsbT, PsbX, PsbY, PsbZ, Psb30/Ycf12, at least 3 peripheral proteins of the oxygen-evolving complex and a large number of cofactors. It forms dimeric complexes. The cofactor is The D1/D2 heterodimer binds P680, chlorophylls that are the primary electron donor of PSII, and subsequent electron acceptors. It shares a non-heme iron and each subunit binds pheophytin, quinone, additional chlorophylls, carotenoids and lipids. D1 provides most of the ligands for the Mn4-Ca-O5 cluster of the oxygen-evolving complex (OEC). There is also a Cl(-1) ion associated with D1 and D2, which is required for oxygen evolution. The PSII complex binds additional chlorophylls, carotenoids and specific lipids.. Post-translationally, tyr-161 forms a radical intermediate that is referred to as redox-active TyrZ, YZ or Y-Z. C-terminally processed by CTPA; processing is essential to allow assembly of the oxygen-evolving complex and thus photosynthetic growth.

It localises to the plastid. The protein resides in the chloroplast thylakoid membrane. It catalyses the reaction 2 a plastoquinone + 4 hnu + 2 H2O = 2 a plastoquinol + O2. Its function is as follows. Photosystem II (PSII) is a light-driven water:plastoquinone oxidoreductase that uses light energy to abstract electrons from H(2)O, generating O(2) and a proton gradient subsequently used for ATP formation. It consists of a core antenna complex that captures photons, and an electron transfer chain that converts photonic excitation into a charge separation. The D1/D2 (PsbA/PsbD) reaction center heterodimer binds P680, the primary electron donor of PSII as well as several subsequent electron acceptors. The chain is Photosystem II protein D1 from Porphyra purpurea (Red seaweed).